A 260-amino-acid chain; its full sequence is MEKFIDLLEFGSAEQKRKMGRPSKIPPFSHYDAYRRSDIDFFISLFSGREELYSPCKKNSDFRQKAFYIIEKKCGHFLAMRKGRNAEKLWLYLFNDFEKMIRNGGDKNDEKSKSIVPFYDCLQFLIPYLEKTDSLSKLTLTTCNAEADDQQVKAKKPKIEHELSEDKLNDDWLQKVIDTVTCQQSTSCTSIQLNSSAPSTCSAKTPNSTANLPTSEKHADIIAYVTNFLEDVPNDKLMLHKVRLFQFIEEEKSRLKEESK.

This is an uncharacterized protein from Caenorhabditis elegans.